The primary structure comprises 471 residues: MANKAVNDFILAMNYDKKKLLTHQGESIENRFIKEGNQLPDEFVVIERKKRSLSTNTSDISVTATNDSRLYPGALLVVDETLLENNPTLLAVDRAPMTYSIDLPGLASSDSFLQVEDPSNSSVRGAVNDLLAKWHQDYGQVNNVPARMQYEKITAHSMEQLKVKFGSDFEKTGNSLDIDFNSVHSGEKQIQIVNFKQIYYTVSVDAVKNPGDVFQDTVTVEDLKQRGISAERPLVYISSVAYGRQVYLKLETTSKSDEVEAAFEALIKGVKVAPQTEWKQILDNTEVKAVILGGDPSSGARVVTGKVDMVEDLIQEGSRFTADHPGLPISYTTSFLRDNVVATFQNSTDYVETKVTAYRNGDLLLDHSGAYVAQYYITWNELSYDHQGKEVLTPKAWDRNGQDLTAHFTTSIPLKGNVRNLSVKIRECTGLAWEWWRTVYEKTDLPLVRKRTISIWGTTLYPQVEDKVEND.

4 beta stranded membrane passes run 158 to 171 (MEQL…DFEK), 178 to 187 (IDFNSVHSGE), 256 to 265 (SDEVEAAFEA), and 273 to 285 (APQT…LDNT). A Conserved undecapeptide motif is present at residues 427-437 (ECTGLAWEWWR). Positions 459-460 (TL) match the Cholesterol binding motif.

It belongs to the cholesterol-dependent cytolysin family. In terms of assembly, homooligomeric pore complex of 35 to 50 subunits; when inserted in the host membrane. Post-translationally, has a slightly altered apparent molecular weight in a secA2 deletion mutant, but no post-translational modifications have been found.

The protein localises to the secreted. It localises to the cell wall. It is found in the host cell membrane. In terms of biological role, a cholesterol-dependent toxin that causes cytolysis by forming pores in cholesterol containing host membranes. After binding to target membranes, the protein undergoes a major conformation change, leading to its insertion in the host membrane and formation of an oligomeric pore complex. Cholesterol is required for binding to host membranes, membrane insertion and pore formation; cholesterol binding is mediated by a Thr-Leu pair in the C-terminus. Can be reversibly inactivated by oxidation. The protein is Pneumolysin (ply) of Streptococcus pneumoniae serotype 4 (strain ATCC BAA-334 / TIGR4).